Here is a 133-residue protein sequence, read N- to C-terminus: Hemoglobin subunit alpha-2 (133 aa).

Residues 1 to 133 (NVKAVWEHVK…VKNVLTSRYR (133 aa)) form the Globin domain. Histidine 50 is an O2 binding site. A heme b-binding site is contributed by histidine 79.

The protein belongs to the globin family. In terms of assembly, minor hemoglobin is a heterotetramer of two alpha-2 chains and two beta-2 chains. As to expression, red blood cells.

Its function is as follows. Involved in oxygen transport from the lung to the various peripheral tissues. This chain is Hemoglobin subunit alpha-2, found in Pleurodeles waltl (Iberian ribbed newt).